The chain runs to 117 residues: Large ribosomal subunit protein bL20 (117 aa).

The protein belongs to the bacterial ribosomal protein bL20 family.

Its function is as follows. Binds directly to 23S ribosomal RNA and is necessary for the in vitro assembly process of the 50S ribosomal subunit. It is not involved in the protein synthesizing functions of that subunit. This chain is Large ribosomal subunit protein bL20, found in Rickettsia akari (strain Hartford).